The chain runs to 179 residues: DNA utilization protein HofN (179 aa).

A helical transmembrane segment spans residues 19-39; that stretch reads LRFWLLMFVAPLLLAVGITLI.

Its subcellular location is the cell inner membrane. In terms of biological role, required for the use of extracellular DNA as a nutrient. This is DNA utilization protein HofN (hofN) from Escherichia coli (strain K12).